The chain runs to 102 residues: MHVKKGDTVVVITGKDKGKKGKVLQVLPKKNRVIVEGVAMVTKHQKPNQQMQQGGRIEQEAAIDASNVMIWDKKANQGVRVGYKLENGKKVRVSKKTGEVID.

It belongs to the universal ribosomal protein uL24 family. In terms of assembly, part of the 50S ribosomal subunit.

In terms of biological role, one of two assembly initiator proteins, it binds directly to the 5'-end of the 23S rRNA, where it nucleates assembly of the 50S subunit. One of the proteins that surrounds the polypeptide exit tunnel on the outside of the subunit. The polypeptide is Large ribosomal subunit protein uL24 (Alkaliphilus oremlandii (strain OhILAs) (Clostridium oremlandii (strain OhILAs))).